Reading from the N-terminus, the 124-residue chain is Small ribosomal subunit protein uS13 (124 aa).

A disordered region spans residues Gly95–Lys124.

The protein belongs to the universal ribosomal protein uS13 family. As to quaternary structure, part of the 30S ribosomal subunit. Forms a loose heterodimer with protein S19. Forms two bridges to the 50S subunit in the 70S ribosome.

Located at the top of the head of the 30S subunit, it contacts several helices of the 16S rRNA. In the 70S ribosome it contacts the 23S rRNA (bridge B1a) and protein L5 of the 50S subunit (bridge B1b), connecting the 2 subunits; these bridges are implicated in subunit movement. Contacts the tRNAs in the A and P-sites. The polypeptide is Small ribosomal subunit protein uS13 (Rhodococcus jostii (strain RHA1)).